Reading from the N-terminus, the 618-residue chain is MAAVRGLRVSVKAGGGAEPEPMEVEEGEVEAAAGRTSPVEATADQTSPREVVPGSDRRYENRAGTFITGIDVTSKEAIEKKEQRAKRFHFRAEVSDDQRNVVLDREMMRKVPKVRLETLYICGVDEMSTQDIFAFFKQYPPGYIEWLDDSSCNVVWLDEVTASRALLNLSSKPTNEKGQRKKDGEHRSARSKKDRLDDSPQSSGDETEEGEVEEDNPNDAEVETENKSENPPETLSQAEQASILKNDLRPSIKTVKGNRLYMRFATKDDKKEHGAASKSQYYMKYGNPNYGGMKGILSNSWKKRYHSRRIQRDVIKKRTFIGDDVGLTPTYKHHHSGLVNVPEEPIEEEEEEEEEEEEDMDEDDRVVEYRDELQAFKREREGARRCAASNSDSDEMDYDLELKMISTPSPKKSMKMTMYADEVESQLKTIRHSMRSDSAGNSVKSRIGSKSHSEKPADVRLILEEKRQSTASRQQSSSSGKSDVRQRLGKRAHSPEIRKTLSIAPTSRREPLSDVHSRLGLPKQPEGKGLYSDSKEKKTGSLWNRLGTAPKEKDRASEKSGEKSQAAPEEEDSALQQAWGALIKEKEQIRQKKSRLDNLPSLQIEISRESSSGSDTDS.

Residues 1–53 (MAAVRGLRVSVKAGGGAEPEPMEVEEGEVEAAAGRTSPVEATADQTSPREVVP) are disordered. Acidic residues predominate over residues 20–29 (EPMEVEEGEV). The RNA recognition motif (RRM) domain stretch occupies residues 117–178 (ETLYICGVDE…LSSKPTNEKG (62 aa)). A WLDD motif; essential for 7-methylguanosine-containing mRNA cap binding motif is present at residues 146–149 (WLDD). Disordered regions lie at residues 170-250 (SSKP…DLRP), 342-366 (PEEP…DDRV), and 426-618 (QLKT…DTDS). Positions 174-188 (TNEKGQRKKDGEHRS) are enriched in basic and acidic residues. Residues 205–223 (DETEEGEVEEDNPNDAEVE) show a composition bias toward acidic residues. Residues 231–240 (PPETLSQAEQ) show a composition bias toward polar residues. The segment covering 344–365 (EPIEEEEEEEEEEEEDMDEDDR) has biased composition (acidic residues). Residues 436 to 450 (SDSAGNSVKSRIGSK) are compositionally biased toward polar residues. Basic and acidic residues predominate over residues 451–468 (SHSEKPADVRLILEEKRQ). Over residues 469-481 (STASRQQSSSSGK) the composition is skewed to low complexity. Basic and acidic residues-rich tracts occupy residues 507–517 (SRREPLSDVHS), 550–562 (PKEK…KSGE), and 583–596 (IKEK…KSRL). The span at 609–618 (ESSSGSDTDS) shows a compositional bias: low complexity.

This sequence belongs to the NCBP3 family. In terms of assembly, component of an alternative cap-binding complex (CBC) composed of NCBP1/CBP80 and NCBP3.

It is found in the nucleus. It localises to the cytoplasm. Its function is as follows. Associates with NCBP1/CBP80 to form an alternative cap-binding complex (CBC) which plays a key role in mRNA export. NCBP3 serves as adapter protein linking the capped RNAs (m7GpppG-capped RNA) to NCBP1/CBP80. Unlike the conventional CBC with NCBP2 which binds both small nuclear RNA (snRNA) and messenger (mRNA) and is involved in their export from the nucleus, the alternative CBC with NCBP3 does not bind snRNA and associates only with mRNA thereby playing a role in only mRNA export. This chain is Nuclear cap-binding protein subunit 3, found in Xenopus laevis (African clawed frog).